The primary structure comprises 455 residues: Keratin, type I cuticular Ha5 (455 aa).

The segment at 1-97 (MASKCLKAGF…FGEGILTGNE (97 aa)) is head. Positions 97 to 408 (EKETMQSLND…GLLESEDSKL (312 aa)) constitute an IF rod domain. Residues 98 to 132 (KETMQSLNDRLAGYLEKVRQLEQENASLESRIREW) are coil 1A. Positions 133-143 (CEQQVPYMCPD) are linker 1. Residues 144-244 (YQSYFRTIEE…HEEEVNSLRC (101 aa)) form a coil 1B region. Residues 245–260 (QLGDRLNVEVDAAPPV) form a linker 12 region. Residues 261–404 (DLNRVLEEMR…NTYRGLLESE (144 aa)) are coil 2. The interval 405–455 (DSKLPCNPCAPDYSPSKSCLPCLPAASCGPSAARTNCSPRPICVPCPGGRF) is tail.

The protein belongs to the intermediate filament family. Early expression in the hair follicle, mainly found in supramatricial cells and lowermost cortical cells of the hair bulb.

The sequence is that of Keratin, type I cuticular Ha5 (KRT35) from Homo sapiens (Human).